We begin with the raw amino-acid sequence, 60 residues long: UPF0181 protein PMI1604 (60 aa).

Belongs to the UPF0181 family.

This Proteus mirabilis (strain HI4320) protein is UPF0181 protein PMI1604.